The sequence spans 324 residues: Phospho-N-acetylmuramoyl-pentapeptide-transferase (324 aa).

A run of 9 helical transmembrane segments spans residues 13 to 33 (VLSA…IFIP), 57 to 77 (GTPT…MLII), 85 to 105 (GMIV…DDIL), 121 to 141 (MILL…NIGT), 143 to 163 (IIIP…PLVV), 179 to 199 (IDGL…IVGF), 201 to 221 (TGHY…LGFL), 238 to 260 (LALG…IIIV), and 303 to 323 (VKLV…GFIA).

Belongs to the glycosyltransferase 4 family. MraY subfamily. Requires Mg(2+) as cofactor.

The protein resides in the cell membrane. The enzyme catalyses UDP-N-acetyl-alpha-D-muramoyl-L-alanyl-gamma-D-glutamyl-meso-2,6-diaminopimeloyl-D-alanyl-D-alanine + di-trans,octa-cis-undecaprenyl phosphate = di-trans,octa-cis-undecaprenyl diphospho-N-acetyl-alpha-D-muramoyl-L-alanyl-D-glutamyl-meso-2,6-diaminopimeloyl-D-alanyl-D-alanine + UMP. Its pathway is cell wall biogenesis; peptidoglycan biosynthesis. Its function is as follows. Catalyzes the initial step of the lipid cycle reactions in the biosynthesis of the cell wall peptidoglycan: transfers peptidoglycan precursor phospho-MurNAc-pentapeptide from UDP-MurNAc-pentapeptide onto the lipid carrier undecaprenyl phosphate, yielding undecaprenyl-pyrophosphoryl-MurNAc-pentapeptide, known as lipid I. This is Phospho-N-acetylmuramoyl-pentapeptide-transferase from Clostridium botulinum (strain Eklund 17B / Type B).